The sequence spans 553 residues: 5'-nucleotidase (553 aa).

The first 21 residues, 1 to 21 (MKQGLILKSVLSAAIIASLAG), serve as a signal peptide directing secretion. Residue cysteine 22 is the site of N-palmitoyl cysteine attachment. A lipid anchor (S-diacylglycerol cysteine) is attached at cysteine 22. Residues aspartate 45, histidine 47, aspartate 88, asparagine 120, histidine 221, histidine 256, and glutamine 258 each contribute to the a divalent metal cation site. Substrate is bound by residues phenylalanine 432 and 501–507 (FNAAGGD).

The protein belongs to the 5'-nucleotidase family. Chloride serves as cofactor. It depends on Mg(2+) as a cofactor.

The protein resides in the cell outer membrane. It carries out the reaction a ribonucleoside 5'-phosphate + H2O = a ribonucleoside + phosphate. Its function is as follows. Degradation of extracellular 5'-nucleotides for nutritional needs. This is 5'-nucleotidase (nutA) from Vibrio cholerae serotype O1 (strain ATCC 39315 / El Tor Inaba N16961).